A 459-amino-acid chain; its full sequence is WD repeat-containing protein 41 (459 aa).

WD repeat units lie at residues 40–79 (KAHHDIVRFLVQLDDYRFASAGDDGIVVVWNAQTGEKLLE), 82–128 (GHTQ…QVQR), 131–168 (CFQSTVKCLTVLQRLDVWLSGGNDLCVWNRKLDLLCKT), 220–258 (DHQDNILSLINVNDLSFVTGSHVGELIIWDALDWTMQAY), 321–359 (AHDSNVLHVARLPNRQLISCSEDGSVRIWELREKQQLAA), and 403–441 (GHSSSVEMFLYFEDHGLVTCSADHLIILWKNGERESGLR).

As to quaternary structure, component of the C9orf72-SMCR8 complex, at least composed of C9orf72, SMCR8 and WDR41. The complex is formed of two protomers, each individually consisting of one molecule each of C9orf72, SMCR8 and WDR41. The protomers homodimerize via an interaction between C9orf72 (via C-terminus) and SMCR8 (via N-terminus). Within each protomer SMCR8 (via DENN domain) acts as a bridging protein between WDR41 (via C-terminus and N-terminus) and C9orf72 (via C-terminus). The C9orf72-SMCR8 complex associates with the ULK1/ATG1 kinase complex.

It is found in the cytoplasm. Its function is as follows. Non-catalytic component of the C9orf72-SMCR8 complex, a complex that has guanine nucleotide exchange factor (GEF) activity and regulates autophagy. The C9orf72-SMCR8 complex promotes the exchange of GDP to GTP, converting inactive GDP-bound RAB8A and RAB39B into their active GTP-bound form, thereby promoting autophagosome maturation. As part of the C9orf72-SMCR8 complex, stimulates RAB8A and RAB11A GTPase activity in vitro, however WDR42 is shown not be an essential complex component for this function. The C9orf72-SMCR8 complex also acts as a negative regulator of autophagy initiation by interacting with the ULK1/ATG1 kinase complex and inhibiting its protein kinase activity. This is WD repeat-containing protein 41 from Homo sapiens (Human).